A 607-amino-acid polypeptide reads, in one-letter code: Dolichyl-diphosphooligosaccharide--protein glycosyltransferase subunit 1 (607 aa).

Residues 1–23 form the signal peptide; that stretch reads MEAPVARLFLLLLLGSWTPAPGS. At 24 to 434 the chain is on the lumenal side; it reads ASSEAPPLIN…VVHYTFNKVL (411 aa). Residue lysine 187 is modified to N6-acetyllysine. An N-linked (GlcNAc...) asparagine glycan is attached at asparagine 299. A helical transmembrane segment spans residues 435–455; it reads MLQEPLLVVAAFYILFFTVII. At 456–607 the chain is on the cytoplasmic side; that stretch reads YVRLDFSITK…TKIDHILDAL (152 aa). At lysine 538 the chain carries N6-acetyllysine; alternate. Residue lysine 538 forms a Glycyl lysine isopeptide (Lys-Gly) (interchain with G-Cter in SUMO2); alternate linkage.

Belongs to the OST1 family. In terms of assembly, component of the oligosaccharyltransferase (OST) complex. OST exists in two different complex forms which contain common core subunits RPN1, RPN2, OST48, OST4, DAD1 and TMEM258, either STT3A or STT3B as catalytic subunits, and form-specific accessory subunits. STT3A complex assembly occurs through the formation of 3 subcomplexes. Subcomplex 1 contains RPN1 and TMEM258, subcomplex 2 contains the STT3A-specific subunits STT3A, DC2/OSTC, and KCP2 as well as the core subunit OST4, and subcomplex 3 contains RPN2, DAD1, and OST48. The STT3A complex can form stable complexes with the Sec61 complex or with both the Sec61 and TRAP complexes. Interacts with TMEM35A/NACHO. In terms of processing, ubiquitinated by the ECS(ASB11) complex. Ufmylated by UFL1 in response to endoplasmic reticulum stress, promoting reticulophagy of endoplasmic reticulum sheets.

It localises to the endoplasmic reticulum membrane. The protein operates within protein modification; protein glycosylation. Functionally, subunit of the oligosaccharyl transferase (OST) complex that catalyzes the initial transfer of a defined glycan (Glc(3)Man(9)GlcNAc(2) in eukaryotes) from the lipid carrier dolichol-pyrophosphate to an asparagine residue within an Asn-X-Ser/Thr consensus motif in nascent polypeptide chains, the first step in protein N-glycosylation. N-glycosylation occurs cotranslationally and the complex associates with the Sec61 complex at the channel-forming translocon complex that mediates protein translocation across the endoplasmic reticulum (ER). All subunits are required for a maximal enzyme activity. The polypeptide is Dolichyl-diphosphooligosaccharide--protein glycosyltransferase subunit 1 (Macaca fascicularis (Crab-eating macaque)).